The primary structure comprises 123 residues: Small ribosomal subunit protein uS12 (123 aa).

Asp89 carries the 3-methylthioaspartic acid modification.

The protein belongs to the universal ribosomal protein uS12 family. As to quaternary structure, part of the 30S ribosomal subunit. Contacts proteins S8 and S17. May interact with IF1 in the 30S initiation complex.

Its function is as follows. With S4 and S5 plays an important role in translational accuracy. Functionally, interacts with and stabilizes bases of the 16S rRNA that are involved in tRNA selection in the A site and with the mRNA backbone. Located at the interface of the 30S and 50S subunits, it traverses the body of the 30S subunit contacting proteins on the other side and probably holding the rRNA structure together. The combined cluster of proteins S8, S12 and S17 appears to hold together the shoulder and platform of the 30S subunit. The polypeptide is Small ribosomal subunit protein uS12 (Syntrophus aciditrophicus (strain SB)).